Reading from the N-terminus, the 449-residue chain is Procollagen C-endopeptidase enhancer 1 (449 aa).

The first 25 residues, 1–25, serve as a signal peptide directing secretion; that stretch reads MLPAATASLLGPLLTACALLPFAQG. Asparagine 29 carries N-linked (GlcNAc...) asparagine glycosylation. 7 disulfide bridges follow: cysteine 37–cysteine 63, cysteine 90–cysteine 112, cysteine 159–cysteine 186, cysteine 213–cysteine 236, cysteine 318–cysteine 386, cysteine 322–cysteine 389, and cysteine 333–cysteine 437. CUB domains are found at residues 37–149 and 159–273; these read CGGD…YSGR and CGGR…YKTL. Serine 50 is subject to Phosphoserine. The segment at 271 to 321 is disordered; sequence KTLPRGTAKEGQGPGPKRGTEPKVKLPPKSQPPEKTEESPSAPDAPTCPKQ. In terms of domain architecture, NTR spans 318-437; it reads CPKQCRRTGT…ILTNLSKRKC (120 aa). The N-linked (GlcNAc...) asparagine glycan is linked to asparagine 431.

Interacts with EFEMP2. Post-translationally, C-terminally processed at multiple positions.

It localises to the secreted. Binds to the C-terminal propeptide of type I procollagen and enhances procollagen C-proteinase activity. Its function is as follows. C-terminal processed part of PCPE (CT-PCPE) may have an metalloproteinase inhibitory activity. The protein is Procollagen C-endopeptidase enhancer 1 (PCOLCE) of Homo sapiens (Human).